The following is a 485-amino-acid chain: P2X purinoceptor 2 (485 aa).

Residues 1–43 (MAAAQPRLPAGAAMVRRLARGCWSAFWDYETPKVIVVRNRRLG) lie on the Cytoplasmic side of the membrane. Intrachain disulfides connect Cys-22/Cys-443, Cys-126/Cys-177, Cys-137/Cys-160, Cys-143/Cys-171, Cys-227/Cys-237, and Cys-271/Cys-280. Residues 44–64 (FVHRMVQLLILLYFVWYVFIV) form a helical membrane-spanning segment. Topologically, residues 65-339 (QKSYQDSETG…IVHGQAGKFS (275 aa)) are extracellular. ATP-binding residues include Lys-82 and Lys-84. An N-linked (GlcNAc...) asparagine glycan is attached at Asn-195. Thr-197 lines the ATP pocket. Residue Asn-252 is glycosylated (N-linked (GlcNAc...) asparagine). 3 residues coordinate ATP: Ser-297, Asn-301, and Arg-303. Asn-311 carries an N-linked (GlcNAc...) asparagine glycan. Residue Lys-321 coordinates ATP. A pore-forming motif region spans residues 322 to 335 (AYGIRIDVIVHGQA). Residues 340-360 (LIPTIINLATALTSIGVGSFL) traverse the membrane as a helical segment. The Cytoplasmic segment spans residues 361 to 485 (CDWILLTFMN…STDPKGLAQL (125 aa)). The disordered stretch occupies residues 406 to 485 (PPPSHYSQDQ…STDPKGLAQL (80 aa)). Residues 420–436 (PSGEGPALGEGAELPLA) show a composition bias toward low complexity. Over residues 469–478 (PSQQDSTSTD) the composition is skewed to polar residues.

The protein belongs to the P2X receptor family. In terms of assembly, homotrimer and heterotrimer; functional P2XRs are organized as homomeric and heteromeric trimers. Homotrimer. Forms heterotrimer with P2XR1. Forms heterotrimer with P2XR3. Forms heterotrimer with P2XR6.

The protein resides in the cell membrane. The enzyme catalyses Ca(2+)(in) = Ca(2+)(out). It carries out the reaction K(+)(in) = K(+)(out). The catalysed reaction is Na(+)(in) = Na(+)(out). Fast activation by external ATP. Exhibits slow desensitization during prolonged ATP activation. Not sensitive to the ATP agonist:alpha/beta-methylene-ATP. In terms of biological role, ATP-gated nonselective transmembrane cation channel permeable to potassium, sodium and calcium. Activation by extracellular ATP induces a variety of cellular responses, such as excitatory postsynaptic responses in sensory neurons, neuromuscular junctions (NMJ) formation, hearing, perception of taste and peristalsis. In the inner ear, regulates sound transduction and auditory neurotransmission, outer hair cell electromotility, inner ear gap junctions, and K(+) recycling. Mediates synaptic transmission between neurons and from neurons to smooth muscle. The chain is P2X purinoceptor 2 (P2rx2) from Mus musculus (Mouse).